The following is a 114-amino-acid chain: Putative membrane protein insertion efficiency factor (114 aa).

Belongs to the UPF0161 family.

The protein resides in the cell inner membrane. Its function is as follows. Could be involved in insertion of integral membrane proteins into the membrane. The sequence is that of Putative membrane protein insertion efficiency factor from Wolinella succinogenes (strain ATCC 29543 / DSM 1740 / CCUG 13145 / JCM 31913 / LMG 7466 / NCTC 11488 / FDC 602W) (Vibrio succinogenes).